The following is a 125-amino-acid chain: ATP synthase epsilon chain (125 aa).

Belongs to the ATPase epsilon chain family. F-type ATPases have 2 components, CF(1) - the catalytic core - and CF(0) - the membrane proton channel. CF(1) has five subunits: alpha(3), beta(3), gamma(1), delta(1), epsilon(1). CF(0) has three main subunits: a, b and c.

Its subcellular location is the cell inner membrane. Functionally, produces ATP from ADP in the presence of a proton gradient across the membrane. The sequence is that of ATP synthase epsilon chain from Aliarcobacter butzleri (strain RM4018) (Arcobacter butzleri).